A 205-amino-acid polypeptide reads, in one-letter code: Glycerol-3-phosphate acyltransferase (205 aa).

The Periplasmic segment spans residues Met-1–Ala-3. Residues Ile-4–Val-24 traverse the membrane as a helical segment. Residues Cys-25–Lys-52 lie on the Cytoplasmic side of the membrane. The chain crosses the membrane as a helical span at residues Gly-53–Ala-73. Residues Tyr-74–Pro-80 lie on the Periplasmic side of the membrane. The chain crosses the membrane as a helical span at residues Phe-81 to Gly-101. Residues Phe-102–Ala-111 lie on the Cytoplasmic side of the membrane. Residues Phe-112–Leu-132 form a helical membrane-spanning segment. Residues Thr-133–Ser-137 lie on the Periplasmic side of the membrane. The chain crosses the membrane as a helical span at residues Gly-138–Phe-158. The Cytoplasmic segment spans residues Lys-159–Glu-205.

This sequence belongs to the PlsY family. As to quaternary structure, probably interacts with PlsX.

The protein localises to the cell inner membrane. It catalyses the reaction sn-glycerol 3-phosphate + an acyl-CoA = a 1-acyl-sn-glycero-3-phosphate + CoA. The enzyme catalyses a fatty acyl-[ACP] + sn-glycerol 3-phosphate = a 1-acyl-sn-glycero-3-phosphate + holo-[ACP]. Its pathway is lipid metabolism; phospholipid metabolism. In terms of biological role, catalyzes the transfer of an acyl group from acyl-ACP to glycerol-3-phosphate (G3P) to form lysophosphatidic acid (LPA). This enzyme can also utilize acyl-CoA as fatty acyl donor, but not acyl-PO(4). The protein is Glycerol-3-phosphate acyltransferase of Escherichia fergusonii (strain ATCC 35469 / DSM 13698 / CCUG 18766 / IAM 14443 / JCM 21226 / LMG 7866 / NBRC 102419 / NCTC 12128 / CDC 0568-73).